The primary structure comprises 254 residues: Imidazole glycerol phosphate synthase subunit HisF (254 aa).

Residues Asp12 and Asp132 contribute to the active site.

It belongs to the HisA/HisF family. In terms of assembly, heterodimer of HisH and HisF.

The protein resides in the cytoplasm. It catalyses the reaction 5-[(5-phospho-1-deoxy-D-ribulos-1-ylimino)methylamino]-1-(5-phospho-beta-D-ribosyl)imidazole-4-carboxamide + L-glutamine = D-erythro-1-(imidazol-4-yl)glycerol 3-phosphate + 5-amino-1-(5-phospho-beta-D-ribosyl)imidazole-4-carboxamide + L-glutamate + H(+). It functions in the pathway amino-acid biosynthesis; L-histidine biosynthesis; L-histidine from 5-phospho-alpha-D-ribose 1-diphosphate: step 5/9. Functionally, IGPS catalyzes the conversion of PRFAR and glutamine to IGP, AICAR and glutamate. The HisF subunit catalyzes the cyclization activity that produces IGP and AICAR from PRFAR using the ammonia provided by the HisH subunit. In Symbiobacterium thermophilum (strain DSM 24528 / JCM 14929 / IAM 14863 / T), this protein is Imidazole glycerol phosphate synthase subunit HisF.